We begin with the raw amino-acid sequence, 428 residues long: Tyrosine--tRNA ligase (428 aa).

Y41 serves as a coordination point for L-tyrosine. A 'HIGH' region motif is present at residues 46–55 (PTADSLHLGH). L-tyrosine contacts are provided by Y179 and Q183. Residues 239-243 (KFGKT) carry the 'KMSKS' region motif. K242 contributes to the ATP binding site. The region spanning 361–418 (TDLMQALVDAELQPSRGQARKTIASNAVTINGEKQSDPEYIFNDEDRLFGRYTLLRRG) is the S4 RNA-binding domain.

Belongs to the class-I aminoacyl-tRNA synthetase family. TyrS type 1 subfamily. As to quaternary structure, homodimer.

It localises to the cytoplasm. The enzyme catalyses tRNA(Tyr) + L-tyrosine + ATP = L-tyrosyl-tRNA(Tyr) + AMP + diphosphate + H(+). Functionally, catalyzes the attachment of tyrosine to tRNA(Tyr) in a two-step reaction: tyrosine is first activated by ATP to form Tyr-AMP and then transferred to the acceptor end of tRNA(Tyr). This Salmonella arizonae (strain ATCC BAA-731 / CDC346-86 / RSK2980) protein is Tyrosine--tRNA ligase.